The chain runs to 248 residues: MDMTGTISAPLYLLRGLQLIGWRDMPHALDYLFADGALREGTLVAINAEKMLAVEDNPEVRALIEAAEFKYADGISVVRSLRKKYPQAQVSRVAGADLWEALMQRAGAEGTPVFLVGGKPEVLAQTESRLRQRWQVNIVGSQDGYFTPEQRQALFERIRDSGAKIVTVAMGSPRQEIFMRDCRRLYPHALYMGVGGTYDVFTGHVHRAPKFWQDLGLEWFYRLLLQPSRIKRQFRLLRYLRWHYSGKL.

It belongs to the glycosyltransferase 26 family.

It carries out the reaction UDP-N-acetyl-alpha-D-mannosaminouronate + N-acetyl-alpha-D-glucosaminyl-di-trans,octa-cis-undecaprenyl diphosphate = beta-D-ManNAcA-(1-&gt;4)-alpha-D-GlcNAc-di-trans,octa-cis-undecaprenyl diphosphate + UDP + H(+). It functions in the pathway bacterial outer membrane biogenesis; enterobacterial common antigen biosynthesis. In terms of biological role, catalyzes the synthesis of Und-PP-GlcNAc-ManNAcA (Lipid II), the second lipid-linked intermediate involved in enterobacterial common antigen (ECA) synthesis. This chain is UDP-N-acetyl-D-mannosaminuronic acid transferase, found in Klebsiella pneumoniae subsp. pneumoniae (strain ATCC 700721 / MGH 78578).